A 490-amino-acid chain; its full sequence is Betaine aldehyde dehydrogenase (490 aa).

D93 provides a ligand contact to K(+). Residue 150-152 participates in NAD(+) binding; sequence GAW. The Charge relay system role is filled by K162. 176–179 is an NAD(+) binding site; sequence KPSE. A K(+)-binding site is contributed by V180. Residue 230 to 233 participates in NAD(+) binding; the sequence is GIAS. L246 contacts K(+). The Proton acceptor role is filled by E252. NAD(+)-binding residues include G254, C286, and E387. The Nucleophile role is filled by C286. C286 carries the cysteine sulfenic acid (-SOH) modification. Residues K457 and G460 each contribute to the K(+) site. E464 serves as the catalytic Charge relay system.

Belongs to the aldehyde dehydrogenase family. Dimer of dimers. It depends on K(+) as a cofactor.

The catalysed reaction is betaine aldehyde + NAD(+) + H2O = glycine betaine + NADH + 2 H(+). The protein operates within amine and polyamine biosynthesis; betaine biosynthesis via choline pathway; betaine from betaine aldehyde: step 1/1. Involved in the biosynthesis of the osmoprotectant glycine betaine. Catalyzes the irreversible oxidation of betaine aldehyde to the corresponding acid. In Yersinia pseudotuberculosis serotype I (strain IP32953), this protein is Betaine aldehyde dehydrogenase.